The sequence spans 166 residues: Protein-export protein SecB (166 aa).

This sequence belongs to the SecB family. Homotetramer, a dimer of dimers. One homotetramer interacts with 1 SecA dimer.

It localises to the cytoplasm. One of the proteins required for the normal export of preproteins out of the cell cytoplasm. It is a molecular chaperone that binds to a subset of precursor proteins, maintaining them in a translocation-competent state. It also specifically binds to its receptor SecA. The chain is Protein-export protein SecB from Sinorhizobium fredii (strain NBRC 101917 / NGR234).